Here is a 378-residue protein sequence, read N- to C-terminus: tRNA-specific 2-thiouridylase MnmA (378 aa).

Residues 12-19 (GLSGGVDS) and methionine 38 each bind ATP. Positions 98-100 (NPD) are interaction with target base in tRNA. Catalysis depends on cysteine 103, which acts as the Nucleophile. Cysteines 103 and 201 form a disulfide. Position 127 (glycine 127) interacts with ATP. The interaction with tRNA stretch occupies residues 151 to 153 (KDQ). The Cysteine persulfide intermediate role is filled by cysteine 201. An interaction with tRNA region spans residues 319 to 320 (RY).

The protein belongs to the MnmA/TRMU family.

It is found in the cytoplasm. It catalyses the reaction S-sulfanyl-L-cysteinyl-[protein] + uridine(34) in tRNA + AH2 + ATP = 2-thiouridine(34) in tRNA + L-cysteinyl-[protein] + A + AMP + diphosphate + H(+). Functionally, catalyzes the 2-thiolation of uridine at the wobble position (U34) of tRNA, leading to the formation of s(2)U34. The protein is tRNA-specific 2-thiouridylase MnmA of Paracidovorax citrulli (strain AAC00-1) (Acidovorax citrulli).